Here is a 64-residue protein sequence, read N- to C-terminus: Antimicrobial peptide 1 (64 aa).

The N-terminal stretch at methionine 1 to serine 26 is a signal peptide. Cystine bridges form between cysteine 29–cysteine 46, cysteine 36–cysteine 50, and cysteine 45–cysteine 61.

It belongs to the AMP family.

It localises to the secreted. Functionally, possesses antifungal and antibacterial activity. The sequence is that of Antimicrobial peptide 1 from Mesembryanthemum crystallinum (Common ice plant).